The sequence spans 184 residues: Photosystem I assembly protein Ycf4 (184 aa).

The next 2 helical transmembrane spans lie at 21–41 (YFWA…GLSS) and 63–83 (IIMT…WLTI).

It belongs to the Ycf4 family.

It is found in the plastid. Its subcellular location is the chloroplast thylakoid membrane. In terms of biological role, seems to be required for the assembly of the photosystem I complex. The polypeptide is Photosystem I assembly protein Ycf4 (Gracilaria tenuistipitata var. liui (Red alga)).